The chain runs to 474 residues: tRNA-2-methylthio-N(6)-dimethylallyladenosine synthase (474 aa).

One can recognise an MTTase N-terminal domain in the interval 3–120; sequence KKLHIKTWGC…LPEMINSVRG (118 aa). Positions 12, 49, 83, 157, 161, and 164 each coordinate [4Fe-4S] cluster. Positions 143-375 constitute a Radical SAM core domain; the sequence is RAEGPTAFVS…QERINQQAMA (233 aa). In terms of domain architecture, TRAM spans 378-441; sequence RRMLGTTQRI…PNSLRGKVVR (64 aa).

It belongs to the methylthiotransferase family. MiaB subfamily. Monomer. It depends on [4Fe-4S] cluster as a cofactor.

It is found in the cytoplasm. The catalysed reaction is N(6)-dimethylallyladenosine(37) in tRNA + (sulfur carrier)-SH + AH2 + 2 S-adenosyl-L-methionine = 2-methylsulfanyl-N(6)-dimethylallyladenosine(37) in tRNA + (sulfur carrier)-H + 5'-deoxyadenosine + L-methionine + A + S-adenosyl-L-homocysteine + 2 H(+). Functionally, catalyzes the methylthiolation of N6-(dimethylallyl)adenosine (i(6)A), leading to the formation of 2-methylthio-N6-(dimethylallyl)adenosine (ms(2)i(6)A) at position 37 in tRNAs that read codons beginning with uridine. In Escherichia coli O81 (strain ED1a), this protein is tRNA-2-methylthio-N(6)-dimethylallyladenosine synthase.